We begin with the raw amino-acid sequence, 184 residues long: Protein Syd (184 aa).

This sequence belongs to the Syd family.

It is found in the cell inner membrane. Interacts with the SecY protein in vivo. May bind preferentially to an uncomplexed state of SecY, thus functioning either as a chelating agent for excess SecY in the cell or as a regulatory factor that negatively controls the translocase function. The sequence is that of Protein Syd from Photorhabdus laumondii subsp. laumondii (strain DSM 15139 / CIP 105565 / TT01) (Photorhabdus luminescens subsp. laumondii).